Here is a 462-residue protein sequence, read N- to C-terminus: Na(+)/H(+) antiporter NhaA (462 aa).

Transmembrane regions (helical) follow at residues 24–44 (ISGL…NLPL), 66–86 (LPIG…TVGL), 102–122 (AAAV…ILFL), 156–176 (GWAV…ALFA), 196–216 (LLAI…YWFI), 235–255 (PWIA…EAGI), 256–275 (HPTL…VMHG), 290–310 (PFSA…VHFE), 312–332 (MSPL…LVVG), 361–381 (MIPA…IASL), and 392–412 (ARFG…VLLS).

This sequence belongs to the NhaA Na(+)/H(+) (TC 2.A.33) antiporter family.

Its subcellular location is the cell membrane. The enzyme catalyses Na(+)(in) + 2 H(+)(out) = Na(+)(out) + 2 H(+)(in). Its function is as follows. Na(+)/H(+) antiporter that extrudes sodium in exchange for external protons. The chain is Na(+)/H(+) antiporter NhaA from Bifidobacterium breve (strain NCIMB 8807 / UCC2003).